A 178-amino-acid polypeptide reads, in one-letter code: Gluconokinase (178 aa).

19–26 contributes to the ATP binding site; sequence GVSGTGKT.

This sequence belongs to the gluconokinase GntK/GntV family. In terms of assembly, monomer.

The enzyme catalyses D-gluconate + ATP = 6-phospho-D-gluconate + ADP + H(+). It functions in the pathway carbohydrate acid metabolism; D-gluconate degradation. Its activity is regulated as follows. Activated by magnesium. In terms of biological role, phosphorylates gluconate to 6-phosphogluconate. The chain is Gluconokinase from Gluconobacter oxydans (strain 621H) (Gluconobacter suboxydans).